A 212-amino-acid polypeptide reads, in one-letter code: MQLNIYLRDSKLSHPVFKTMSEIALFIINSINEIDVGQVDRFVGELERVYREKRKVLVMGAGRSGLVGKAFAMRLLHLGFNSYVLGETIVPSVREGDLVVAISGSGRTKVIVTAAETAKQVGATVAAITTYPDSPLGRLSDIVVRVPGRTKSSKMDDYFARQILGIHEPLAPLGTLFEDTTMVFLDGVIYSLMTRLGIDEEYMRNMHANVEL.

Residues 46-198 (LERVYREKRK…IYSLMTRLGI (153 aa)) form the SIS domain.

Belongs to the SIS family. PHI subfamily.

This is an uncharacterized protein from Aeropyrum pernix (strain ATCC 700893 / DSM 11879 / JCM 9820 / NBRC 100138 / K1).